The following is a 77-amino-acid chain: MAKLSCSYFLVLILVFSAFLMVERAEGKRCHLTIDKATACSLSDCRLSCYSGYNGVGKCFDDPKVAGPSNCGCIYNC.

An N-terminal signal peptide occupies residues 1-27; sequence MAKLSCSYFLVLILVFSAFLMVERAEG. 4 cysteine pairs are disulfide-bonded: Cys-30–Cys-77, Cys-40–Cys-59, Cys-45–Cys-71, and Cys-49–Cys-73.

Belongs to the DEFL family.

Its subcellular location is the secreted. In Arabidopsis thaliana (Mouse-ear cress), this protein is Defensin-like protein 159 (LCR25).